A 617-amino-acid chain; its full sequence is Secretogranin-2 (617 aa).

The signal sequence occupies residues 1–30 (MAGAKAYRLGAVLLLIHLIFLISGAEAASF). Residue Tyr-153 is modified to Sulfotyrosine. Ser-176 and Ser-270 each carry phosphoserine. 2 stretches are compositionally biased toward basic and acidic residues: residues 261–286 (TQTQ…EMKR) and 295–307 (EENR…QLSE). Positions 261–307 (TQTQEEVRDSKENTEKNEQINEEMKRSGQLGLPDEENRRESKDQLSE) are disordered. Phosphoserine occurs at positions 434, 532, 555, and 556.

It belongs to the chromogranin/secretogranin protein family. Interacts with Secretogranin III/SCG3.

It localises to the secreted. Neuroendocrine protein of the granin family that regulates the biogenesis of secretory granules. In Mus musculus (Mouse), this protein is Secretogranin-2 (Scg2).